The following is a 680-amino-acid chain: 1-deoxy-D-xylulose-5-phosphate synthase (680 aa).

Residues 1–17 are compositionally biased toward low complexity; the sequence is MQQSPHSPQSQSLSASA. Positions 1-20 are disordered; sequence MQQSPHSPQSQSLSASAVDS. Residues H113 and 154-156 contribute to the thiamine diphosphate site; that span reads GHS. A Mg(2+)-binding site is contributed by D185. Residues 186 to 187, N214, F323, and E408 contribute to the thiamine diphosphate site; that span reads GA. N214 is a binding site for Mg(2+).

This sequence belongs to the transketolase family. DXPS subfamily. Homodimer. Requires Mg(2+) as cofactor. It depends on thiamine diphosphate as a cofactor.

It carries out the reaction D-glyceraldehyde 3-phosphate + pyruvate + H(+) = 1-deoxy-D-xylulose 5-phosphate + CO2. It participates in metabolic intermediate biosynthesis; 1-deoxy-D-xylulose 5-phosphate biosynthesis; 1-deoxy-D-xylulose 5-phosphate from D-glyceraldehyde 3-phosphate and pyruvate: step 1/1. Its function is as follows. Catalyzes the acyloin condensation reaction between C atoms 2 and 3 of pyruvate and glyceraldehyde 3-phosphate to yield 1-deoxy-D-xylulose-5-phosphate (DXP). The chain is 1-deoxy-D-xylulose-5-phosphate synthase from Psychrobacter cryohalolentis (strain ATCC BAA-1226 / DSM 17306 / VKM B-2378 / K5).